Consider the following 233-residue polypeptide: Large ribosomal subunit protein uL1 (233 aa).

Belongs to the universal ribosomal protein uL1 family. As to quaternary structure, part of the 50S ribosomal subunit.

In terms of biological role, binds directly to 23S rRNA. The L1 stalk is quite mobile in the ribosome, and is involved in E site tRNA release. Protein L1 is also a translational repressor protein, it controls the translation of the L11 operon by binding to its mRNA. The sequence is that of Large ribosomal subunit protein uL1 from Geotalea daltonii (strain DSM 22248 / JCM 15807 / FRC-32) (Geobacter daltonii).